A 439-amino-acid polypeptide reads, in one-letter code: Xaa-Pro dipeptidase (439 aa).

Asp244, Asp255, His335, Glu380, and Glu419 together coordinate Mn(2+).

The protein belongs to the peptidase M24B family. Bacterial-type prolidase subfamily. Mn(2+) is required as a cofactor.

It carries out the reaction Xaa-L-Pro dipeptide + H2O = an L-alpha-amino acid + L-proline. In terms of biological role, splits dipeptides with a prolyl residue in the C-terminal position. This Shewanella sp. (strain MR-4) protein is Xaa-Pro dipeptidase.